Consider the following 332-residue polypeptide: Probable sugar phosphate/phosphate translocator At1g53660 (332 aa).

A run of 10 helical transmembrane segments spans residues 19 to 39 (ASILLYITLSSGQIFFNKWVL), 46 to 66 (FPYPLGLTLLHMTFSSVLCFL), 82 to 102 (LEIYVTSVIPIGAMFAMTLWL), 120 to 140 (AIMPVAVFILGVCVGLEIMSC), 143 to 163 (LLIMSVISFGVLVSSYGELNI), 165 to 185 (WVGVVYQMGGIVSEALRLILM), 199 to 219 (LSLMYYMSPCSAICLFIPWIF), 233 to 253 (LVLSLNSLCTFALNLSVFLVI), 259 to 281 (LTIRIAGVVKDWLVVLVSALLFA), and 285 to 304 (LTIINLFGYAVAIVGVATYN). Residues 312-322 (ESITLVSQSPK) show a composition bias toward polar residues. Residues 312–332 (ESITLVSQSPKNSDKKPDGPL) are disordered. Residues 323 to 332 (NSDKKPDGPL) are compositionally biased toward basic and acidic residues.

This sequence belongs to the TPT transporter family. TPT (TC 2.A.7.9) subfamily.

It is found in the membrane. This chain is Probable sugar phosphate/phosphate translocator At1g53660, found in Arabidopsis thaliana (Mouse-ear cress).